A 266-amino-acid chain; its full sequence is Phosphate import ATP-binding protein PstB (266 aa).

Residues 15-261 (VQKSVVNKLN…PKNKQTEDYI (247 aa)) enclose the ABC transporter domain. Residue 50 to 57 (GPSGCGKS) participates in ATP binding.

The protein belongs to the ABC transporter superfamily. Phosphate importer (TC 3.A.1.7) family. As to quaternary structure, the complex is composed of two ATP-binding proteins (PstB), two transmembrane proteins (PstC and PstA) and a solute-binding protein (PstS).

It localises to the cell inner membrane. It carries out the reaction phosphate(out) + ATP + H2O = ADP + 2 phosphate(in) + H(+). Functionally, part of the ABC transporter complex PstSACB involved in phosphate import. Responsible for energy coupling to the transport system. In Nitrosomonas europaea (strain ATCC 19718 / CIP 103999 / KCTC 2705 / NBRC 14298), this protein is Phosphate import ATP-binding protein PstB.